The primary structure comprises 429 residues: Adenylosuccinate synthetase (429 aa).

Residues 12–18 and 40–42 contribute to the GTP site; these read GDEGKGK and GHT. The active-site Proton acceptor is aspartate 13. Mg(2+)-binding residues include aspartate 13 and glycine 40. IMP contacts are provided by residues 13–16, 38–41, threonine 128, arginine 142, glutamine 223, threonine 238, and arginine 302; these read DEGK and NAGH. The active-site Proton donor is histidine 41. 298–304 contributes to the substrate binding site; the sequence is TTTGRPR. Residues arginine 304, 330-332, and 412-414 each bind GTP; these read SID and SVG.

The protein belongs to the adenylosuccinate synthetase family. In terms of assembly, homodimer. Mg(2+) serves as cofactor.

It is found in the cytoplasm. The catalysed reaction is IMP + L-aspartate + GTP = N(6)-(1,2-dicarboxyethyl)-AMP + GDP + phosphate + 2 H(+). It participates in purine metabolism; AMP biosynthesis via de novo pathway; AMP from IMP: step 1/2. Its function is as follows. Plays an important role in the de novo pathway of purine nucleotide biosynthesis. Catalyzes the first committed step in the biosynthesis of AMP from IMP. This chain is Adenylosuccinate synthetase, found in Bacillus cereus (strain ATCC 10987 / NRS 248).